Here is a 212-residue protein sequence, read N- to C-terminus: Pyrrolidone-carboxylate peptidase (212 aa).

Active-site residues include Glu-78, Cys-141, and His-165.

It belongs to the peptidase C15 family. Homotetramer.

The protein localises to the cytoplasm. It catalyses the reaction Release of an N-terminal pyroglutamyl group from a polypeptide, the second amino acid generally not being Pro.. Functionally, removes 5-oxoproline from various penultimate amino acid residues except L-proline. This Staphylococcus aureus protein is Pyrrolidone-carboxylate peptidase (pcp).